We begin with the raw amino-acid sequence, 592 residues long: Anaphase-promoting complex subunit 8 (592 aa).

TPR repeat units lie at residues 66 to 99, 160 to 193, 291 to 324, 359 to 392, 393 to 426, 428 to 460, 461 to 494, and 496 to 528; these read EYYKYILAKNYFDLKEYRRCSDVLIDCNKYQLPI, QQQQQQQQQKIEQCQEFKQLFQFYKKLYIENKKD, TYILAQTAIGNYNLRAYDIGEELFERLIELEPNR, PETCCIIGNYYSLKLEHDKAILYFQRALKLNDRY, LSAWTLIGHEFLEIKNVSAAINAYRKAVDINPRD, RAWYGLGQTYQLLKLPLYSLYYFKKATTLRPYD, PRMWCAAGGCYEFIERIPEAIKCYERAEENYDRE, and VAINKLAKLYQEIQNNEKAAFYYKKNLYYCDQE. Positions 129 to 166 are disordered; the sequence is QQQAQQQAQQAQQESQQNDKNNDTNNNNKTDQQQQQQQ.

The protein belongs to the APC8/CDC23 family. In terms of assembly, the APC/C is composed of at least 13 subunits that stay tightly associated throughout the cell cycle: anapc1, anapc2, anapc3, anapc4, anapc5, anapc6, anapc7, anapc8, anapc10, anapc11, cdc20, cdc26 and cdh1.

The protein localises to the nucleus. Its pathway is protein modification; protein ubiquitination. In terms of biological role, component of the anaphase promoting complex/cyclosome (APC/C), a cell cycle-regulated E3 ubiquitin-protein ligase complex that controls progression through mitosis and the G1 phase of the cell cycle. This Dictyostelium discoideum (Social amoeba) protein is Anaphase-promoting complex subunit 8 (anapc8).